Consider the following 307-residue polypeptide: Homoserine kinase (307 aa).

ATP is bound at residue 85–95; that stretch reads PLTRGLGSSAA.

Belongs to the GHMP kinase family. Homoserine kinase subfamily.

The protein resides in the cytoplasm. It catalyses the reaction L-homoserine + ATP = O-phospho-L-homoserine + ADP + H(+). Its pathway is amino-acid biosynthesis; L-threonine biosynthesis; L-threonine from L-aspartate: step 4/5. In terms of biological role, catalyzes the ATP-dependent phosphorylation of L-homoserine to L-homoserine phosphate. The sequence is that of Homoserine kinase from Caldicellulosiruptor bescii (strain ATCC BAA-1888 / DSM 6725 / KCTC 15123 / Z-1320) (Anaerocellum thermophilum).